The following is a 42-amino-acid chain: Photosystem I reaction center subunit IX (42 aa).

A helical transmembrane segment spans residues 7 to 27 (YLSIAPVLATLWFGFLVGSLI).

This sequence belongs to the PsaJ family.

The protein localises to the plastid membrane. Functionally, may help in the organization of the PsaE and PsaF subunits. This Aneura mirabilis (Parasitic liverwort) protein is Photosystem I reaction center subunit IX.